The following is a 401-amino-acid chain: MPICEFSATSKSRKIDVHAHVLPKNIPDFQEKFGYPGFVRLDHKEDGTTHMVKDGKLFRVVEPNCFDTETRIADMNRANVNVQCLSTVPVMFSYWAKPADTEIVARFVNDDLLAECQKFPDRLVPLGTLPMNDVQRAVEIFGKRIFFFEIWSPAKKSPEEVKRCVSMGIKGFEVGSHVAEKSLDHRDFWPLYKLTESFKLSTIMPGFCEFFENWGLTTKTPGICEELSVVLFVHPWDMHMWDGRLDKYWMPWLVGMPSETAQAICSVLMGNILVLFPKLKLCFAHGGGAYPQIRGRVSHGWNVRPDLCAGKCKVAPNKLDGLLWTDSLVHDPKALELLINTVGKEHIVLGTDYPFPLGELEVGRVVEEYKPFSAKDREDLLWKNAVKMLDIDENLLFNKDF.

Zn(2+) is bound by residues His-18 and His-20. A substrate-binding site is contributed by Arg-59. Residues His-234 and Asp-352 each contribute to the Zn(2+) site.

Belongs to the metallo-dependent hydrolases superfamily. ACMSD family. As to quaternary structure, monomer.

The enzyme catalyses 2-amino-3-carboxymuconate 6-semialdehyde + H(+) = 2-aminomuconate 6-semialdehyde + CO2. It participates in secondary metabolite metabolism; quinolate metabolism. In terms of biological role, converts alpha-amino-beta-carboxymuconate-epsilon-semialdehyde (ACMS) to alpha-aminomuconate semialdehyde (AMS). This chain is 2-amino-3-carboxymuconate-6-semialdehyde decarboxylase, found in Caenorhabditis elegans.